An 80-amino-acid polypeptide reads, in one-letter code: FXYD domain-containing ion transport regulator 7 (80 aa).

Topologically, residues 1–23 (MATPTQTPTKAPEEPDPFYYDYN) are extracellular. Residues Thr-3, Thr-5, and Thr-9 are each glycosylated (O-linked (GlcNAc) threonine). A helical transmembrane segment spans residues 24-46 (TVQTVGMTLATILFLLGILIVIS). Residues 47–80 (KKVKCRKADSRSESPTCKSCKSELPSSAPGGGGV) lie on the Cytoplasmic side of the membrane. The segment at 54–80 (ADSRSESPTCKSCKSELPSSAPGGGGV) is disordered. Ser-73 carries the post-translational modification Phosphoserine.

The protein belongs to the FXYD family. In terms of assembly, regulatory subunit of the sodium/potassium-transporting ATPase which is composed of a catalytic alpha subunit, a non-catalytic beta subunit and a FXYD regulatory unit that modulates the enzymatic activity in a tissue- and isoform-specific way by changing affinities of the Na+/K+-ATPase toward Na(+), K(+) or ATP. O-glycosylated; required for stabilization and translocation to the plasma membrane.

Its subcellular location is the cell membrane. Its function is as follows. Associates with and regulates the activity of the sodium/potassium-transporting ATPase (NKA) which catalyzes the hydrolysis of ATP coupled with the exchange of Na(+) and K(+) ions across the plasma membrane. Reduces the apparent affinity for external K(+), an effect that depends on the presence of external Na(+) and voltage. Increases the apparent affinity for intracellular Na(+). This is FXYD domain-containing ion transport regulator 7 (FXYD7) from Homo sapiens (Human).